Here is a 154-residue protein sequence, read N- to C-terminus: Putative NADPH-dependent 7-cyano-7-deazaguanine reductase (154 aa).

D52 functions as the Proton donor in the catalytic mechanism. Substrate is bound by residues 67–69 (VES) and 86–87 (HE).

Belongs to the GTP cyclohydrolase I family. QueF type 1 subfamily.

It is found in the cytoplasm. The enzyme catalyses 7-aminomethyl-7-carbaguanine + 2 NADP(+) = 7-cyano-7-deazaguanine + 2 NADPH + 3 H(+). The protein operates within tRNA modification; tRNA-queuosine biosynthesis. Catalyzes the NADPH-dependent reduction of 7-cyano-7-deazaguanine (preQ0) to 7-aminomethyl-7-deazaguanine (preQ1). The sequence is that of Putative NADPH-dependent 7-cyano-7-deazaguanine reductase from Streptococcus pneumoniae serotype 4 (strain ATCC BAA-334 / TIGR4).